Here is a 131-residue protein sequence, read N- to C-terminus: Interleukin-13 (131 aa).

A signal peptide spans 1–18 (MALWLTLVIALTCFGGLA). N-linked (GlcNAc...) asparagine glycans are attached at residues Asn39, Asn50, Asn58, and Asn74. Cystine bridges form between Cys49/Cys78 and Cys66/Cys92.

Belongs to the IL-4/IL-13 family. As to quaternary structure, interacts with IL13RA2.

The protein resides in the secreted. Its function is as follows. Cytokine that plays important roles in allergic inflammation and immune response to parasite infection. Synergizes with IL2 in regulating interferon-gamma synthesis. Stimulates B-cell proliferation, and activation of eosinophils, basophils, and mast cells. Plays an important role in controlling IL33 activity by modulating the production of transmembrane and soluble forms of interleukin-1 receptor-like 1/IL1RL1. Displays the capacity to antagonize Th1-driven proinflammatory immune response and downregulates synthesis of many proinflammatory cytokines including IL1, IL6, IL10, IL12 and TNF-alpha through a mechanism that partially involves suppression of NF-kappa-B. Also functions on nonhematopoietic cells, including endothelial cells where it induces vascular cell adhesion protein 1/VCAM1, which is important in the recruitment of eosinophils. Exerts its biological effects through its receptors which comprises the IL4R chain and the IL13RA1 chain, to activate JAK1 and TYK2, leading to the activation of STAT6. Aside from IL13RA1, another receptor IL13RA2 acts as a high affinity decoy for IL13 and mediates internalization and depletion of extracellular IL13. This chain is Interleukin-13 (IL13), found in Sus scrofa (Pig).